The sequence spans 140 residues: uncharacterized protein (140 aa).

Positions 62 to 140 are disordered; it reads TEARAGRGGP…PQGRWGPSLG (79 aa). Positions 71 to 94 are enriched in low complexity; it reads PATARSRVSADSQGGRAGSSSPSS.

This is an uncharacterized protein from Homo sapiens (Human).